A 165-amino-acid chain; its full sequence is Protein SprT (165 aa).

Residues 10 to 158 (EACYRQAEHF…CRRCKATLVF (149 aa)) enclose the SprT-like domain. Residue histidine 69 coordinates Zn(2+). Glutamate 70 is a catalytic residue. A Zn(2+)-binding site is contributed by histidine 73.

It belongs to the SprT family. Zn(2+) is required as a cofactor.

The protein resides in the cytoplasm. This Pseudomonas aeruginosa (strain UCBPP-PA14) protein is Protein SprT.